The chain runs to 222 residues: Thiamine-phosphate synthase (222 aa).

4-amino-2-methyl-5-(diphosphooxymethyl)pyrimidine-binding positions include 42-46 (QYRDK) and asparagine 74. Mg(2+) is bound by residues aspartate 75 and aspartate 94. Threonine 113 lines the 4-amino-2-methyl-5-(diphosphooxymethyl)pyrimidine pocket. 140-142 (SAT) is a 2-[(2R,5Z)-2-carboxy-4-methylthiazol-5(2H)-ylidene]ethyl phosphate binding site. Position 143 (lysine 143) interacts with 4-amino-2-methyl-5-(diphosphooxymethyl)pyrimidine. Residue glycine 169 participates in 2-[(2R,5Z)-2-carboxy-4-methylthiazol-5(2H)-ylidene]ethyl phosphate binding.

This sequence belongs to the thiamine-phosphate synthase family. Mg(2+) is required as a cofactor.

It catalyses the reaction 2-[(2R,5Z)-2-carboxy-4-methylthiazol-5(2H)-ylidene]ethyl phosphate + 4-amino-2-methyl-5-(diphosphooxymethyl)pyrimidine + 2 H(+) = thiamine phosphate + CO2 + diphosphate. It carries out the reaction 2-(2-carboxy-4-methylthiazol-5-yl)ethyl phosphate + 4-amino-2-methyl-5-(diphosphooxymethyl)pyrimidine + 2 H(+) = thiamine phosphate + CO2 + diphosphate. The catalysed reaction is 4-methyl-5-(2-phosphooxyethyl)-thiazole + 4-amino-2-methyl-5-(diphosphooxymethyl)pyrimidine + H(+) = thiamine phosphate + diphosphate. Its pathway is cofactor biosynthesis; thiamine diphosphate biosynthesis; thiamine phosphate from 4-amino-2-methyl-5-diphosphomethylpyrimidine and 4-methyl-5-(2-phosphoethyl)-thiazole: step 1/1. In terms of biological role, condenses 4-methyl-5-(beta-hydroxyethyl)thiazole monophosphate (THZ-P) and 2-methyl-4-amino-5-hydroxymethyl pyrimidine pyrophosphate (HMP-PP) to form thiamine monophosphate (TMP). The sequence is that of Thiamine-phosphate synthase from Marinobacter nauticus (strain ATCC 700491 / DSM 11845 / VT8) (Marinobacter aquaeolei).